The chain runs to 199 residues: dITP/XTP pyrophosphatase (199 aa).

Position 7 to 12 (7 to 12 (SNNPGK)) interacts with substrate. The active-site Proton acceptor is the D68. Residue D68 coordinates Mg(2+). Substrate is bound by residues A69, 154-157 (FGFD), K177, and 182-183 (HR).

This sequence belongs to the HAM1 NTPase family. Homodimer. Requires Mg(2+) as cofactor.

The enzyme catalyses XTP + H2O = XMP + diphosphate + H(+). It carries out the reaction dITP + H2O = dIMP + diphosphate + H(+). It catalyses the reaction ITP + H2O = IMP + diphosphate + H(+). Functionally, pyrophosphatase that catalyzes the hydrolysis of nucleoside triphosphates to their monophosphate derivatives, with a high preference for the non-canonical purine nucleotides XTP (xanthosine triphosphate), dITP (deoxyinosine triphosphate) and ITP. Seems to function as a house-cleaning enzyme that removes non-canonical purine nucleotides from the nucleotide pool, thus preventing their incorporation into DNA/RNA and avoiding chromosomal lesions. This chain is dITP/XTP pyrophosphatase, found in Verminephrobacter eiseniae (strain EF01-2).